The chain runs to 339 residues: Casein kinase II subunit alpha' (339 aa).

Positions 50–334 (YEIINKIGRG…AKEAMDHKFF (285 aa)) constitute a Protein kinase domain. ATP contacts are provided by residues 56–64 (IGRGKYSEV) and Lys-79. Asp-167 serves as the catalytic Proton acceptor.

This sequence belongs to the protein kinase superfamily. Ser/Thr protein kinase family. CK2 subfamily. As to quaternary structure, tetramer composed of an alpha chain, an alpha', one beta chain and one beta' chain. Interacts with FACT subunits POB3 and SPT16. Interacts with NAP1. Interacts with YTA7.

The catalysed reaction is L-seryl-[protein] + ATP = O-phospho-L-seryl-[protein] + ADP + H(+). It catalyses the reaction L-threonyl-[protein] + ATP = O-phospho-L-threonyl-[protein] + ADP + H(+). Functionally, catalytic subunit of a constitutively active serine/threonine-protein kinase complex that phosphorylates a large number of substrates containing acidic residues C-terminal to the phosphorylated serine or threonine. Phosphorylates YTA7 during S-phase to promote transcription of histones. The chain is Casein kinase II subunit alpha' from Saccharomyces cerevisiae (strain ATCC 204508 / S288c) (Baker's yeast).